The chain runs to 144 residues: MKILVLHGPNLNMLGTREPEIYGSLTLDDINAALSQLALDLGIEIECFQTNSEGRLVDRIQSAAGLFDGILINPAAYTHTSIAIRDAIAAAALPAVEVHLSNIHNREKFRTKSYIAPMAIGQICGFGADSYLLGLRAIFNHIKK.

Y22 acts as the Proton acceptor in catalysis. The substrate site is built by N73, H79, and D86. The active-site Proton donor is the H99. Substrate contacts are provided by residues 100-101 (LS) and R110.

It belongs to the type-II 3-dehydroquinase family. Homododecamer.

It carries out the reaction 3-dehydroquinate = 3-dehydroshikimate + H2O. It participates in metabolic intermediate biosynthesis; chorismate biosynthesis; chorismate from D-erythrose 4-phosphate and phosphoenolpyruvate: step 3/7. Functionally, catalyzes a trans-dehydration via an enolate intermediate. This Geotalea daltonii (strain DSM 22248 / JCM 15807 / FRC-32) (Geobacter daltonii) protein is 3-dehydroquinate dehydratase.